A 1103-amino-acid polypeptide reads, in one-letter code: MAGASVKVAVRVRPFNARETSQDAKCVVSMQGNTTSIINPKQSKDAPKSFTFDYSYWSHTSTEDPQFASQQQVYRDIGEEMLLHAFEGYNVCIFAYGQTGAGKSYTMMGRQEPGQQGIVPQLCEDLFSRVSENQSAQLSYSVEVSYMEIYCERVRDLLNPKSRGSLRVREHPILGPYVQDLSKLAVTSYADIADLMDCGNKARTVAATNMNETSSRSHAVFTIVFTQRCHDQLTGLDSEKVSKISLVDLAGSERADSSGARGMRLKEGANINKSLTTLGKVISALADMQSKKRKSDFIPYRDSVLTWLLKENLGGNSRTAMIAALSPADINYEETLSTLRYADRTKQIRCNAIINEDPNARLIRELQEEVARLRELLMAQGLSASALEGLKTEEGSVRGALPAVSSPPAPVSPSSPTTHNGELEPSFSPNTESQIGPEEAMERLQETEKIIAELNETWEEKLRKTEALRMEREALLAEMGVAVREDGGTVGVFSPKKTPHLVNLNEDPLMSECLLYHIKDGVTRVGQVDMDIKLTGQFIREQHCLFRSIPQPDGEVVVTLEPCEGAETYVNGKLVTEPLVLKSGNRIVMGKNHVFRFNHPEQARLERERGVPPPPGPPSEPVDWNFAQKELLEQQGIDIKLEMEKRLQDLENQYRKEKEEADLLLEQQRLYADSDSGDDSDKRSCEESWRLISSLREQLPPTTVQTIVKRCGLPSSGKRRAPRRVYQIPQRRRLQGKDPRWATMADLKMQAVKEICYEVALADFRHGRAEIEALAALKMRELCRTYGKPDGPGDAWRAVARDVWDTVGEEEGGGAGSGGGSEEGARGAEVEDLRAHIDKLTGILQEVKLQNSSKDRELQALRDRMLRMERVIPLAQDHEDENEEGGEVPWAPPEGSEAAEEAAPSDRMPSARPPSPPLSSWERVSRLMEEDPAFRRGRLRWLKQEQLRLQGLQGSGGRGGGLRRPPARFVPPHDCKLRFPFKSNPQHRESWPGMGSGEAPTPLQPPEEVTPHPATPARRPPSPRRSHHPRRNSLDGGGRSRGAGSAQPEPQHFQPKKHNSYPQPPQPYPAQRPPGPRYPPYTTPPRMRRQRSAPDLKESGAAV.

Residues 5-348 (SVKVAVRVRP…LRYADRTKQI (344 aa)) form the Kinesin motor domain. 97–104 (GQTGAGKS) is an ATP binding site. A Phosphoserine modification is found at Ser295. Coiled-coil stretches lie at residues 359–388 (NARLIRELQEEVARLRELLMAQGLSASALE) and 438–479 (EEAM…LAEM). Residues 400-438 (ALPAVSSPPAPVSPSSPTTHNGELEPSFSPNTESQIGPE) form a disordered region. At Ser494 the chain carries Phosphoserine. One can recognise an FHA domain in the interval 523–590 (TRVGQVDMDI…LKSGNRIVMG (68 aa)). Residues 633–674 (EQQGIDIKLEMEKRLQDLENQYRKEKEEADLLLEQQRLYADS) adopt a coiled-coil conformation. Phosphoserine occurs at positions 674 and 676. Disordered regions lie at residues 808 to 828 (GEEEGGGAGSGGGSEEGARGA), 874 to 924 (LAQD…WERV), and 950 to 1103 (QGLQ…GAAV). The span at 813 to 822 (GGAGSGGGSE) shows a compositional bias: gly residues. Positions 828-872 (AEVEDLRAHIDKLTGILQEVKLQNSSKDRELQALRDRMLRMERVI) form a coiled coil. Over residues 893-910 (PEGSEAAEEAAPSDRMPS) the composition is skewed to low complexity. Ser915 carries the post-translational modification Phosphoserine. Positions 953-962 (QGSGGRGGGL) are enriched in gly residues. Over residues 1021-1031 (PSPRRSHHPRR) the composition is skewed to basic residues. The residue at position 1033 (Ser1033) is a Phosphoserine. Arg1041 is subject to Omega-N-methylarginine. A compositionally biased stretch (pro residues) spans 1062-1083 (PQPPQPYPAQRPPGPRYPPYTT). Thr1083 is subject to Phosphothreonine. Position 1092 is a phosphoserine (Ser1092). Over residues 1092-1103 (SAPDLKESGAAV) the composition is skewed to basic and acidic residues.

Belongs to the TRAFAC class myosin-kinesin ATPase superfamily. Kinesin family. Unc-104 subfamily. As to quaternary structure, monomer. Interacts with BICD2. Post-translationally, phosphorylated on tyrosine residues. Expressed in all tissues examined, with most abundant expression in heart and skeletal muscle.

The protein localises to the cytoplasm. It localises to the cytoskeleton. Its function is as follows. Motor required for the retrograde transport of Golgi vesicles to the endoplasmic reticulum. Has a microtubule plus end-directed motility. In Homo sapiens (Human), this protein is Kinesin-like protein KIF1C (KIF1C).